We begin with the raw amino-acid sequence, 42 residues long: Photosystem I reaction center subunit IX (42 aa).

The helical transmembrane segment at 7–27 (YLSVAPVLSTLWFGSLAGLLI) threads the bilayer.

The protein belongs to the PsaJ family.

The protein resides in the plastid. It is found in the chloroplast thylakoid membrane. In terms of biological role, may help in the organization of the PsaE and PsaF subunits. The chain is Photosystem I reaction center subunit IX from Lepidium virginicum (Virginia pepperweed).